We begin with the raw amino-acid sequence, 155 residues long: Movement protein TGB3 (155 aa).

At 1–59 (MAMPHPLECCCPQCLPSSESFPIYGEQEIPCSETQAETTPVEKTVRANVLTDILDDHYY) the chain is on the cytoplasmic side. The helical transmembrane segment at 60–80 (AILASLFIIALWLLYIYLSSI) threads the bilayer. The Lumenal portion of the chain corresponds to 81–130 (PTETGPYFYQDLNSVKIYGIGATNPEVIAAIHHWQKYPFGESPMWGGLIS). Residues 89–93 (YQDLN) carry the Involved in plasmodesmata targeting and virus cell-to-cell movement motif. A helical transmembrane segment spans residues 131–151 (VLSILLKPLTLVFALSFFLLL). The tract at residues 150-155 (LLSSKR) is required for attachment to the host plasmodesmata-associated membrane compartments. Residues 152-155 (SSKR) are Cytoplasmic-facing.

Belongs to the virgaviridae TGB3 movement protein family. In terms of assembly, interacts with movement proteins TGB1 and TGB2. TGB1-TGB3-TGB2 complex formation is enhanced by ATP hydrolysis.

Its subcellular location is the host cell junction. It localises to the host plasmodesma. The protein resides in the host endoplasmic reticulum membrane. It is found in the host cytoplasm. The protein localises to the host cytoskeleton. Functionally, participates in the transport of viral genome to neighboring plant cells directly through plasmodesmata, without any budding. TGBp2 and TGBp3 are necessary for intracellular delivery of TGBp1-containing vRNPs to plasmodesmata. Can gate plasmodesmata and increase their size exclusion limit. Induces host actin cytoskeleton network thickening, which probably plays a major role in virus cell-to-cell movement. The polypeptide is Movement protein TGB3 (Hordeum vulgare (Barley)).